The following is a 112-amino-acid chain: Integration host factor subunit alpha (112 aa).

This sequence belongs to the bacterial histone-like protein family. As to quaternary structure, heterodimer of an alpha and a beta chain.

Functionally, this protein is one of the two subunits of integration host factor, a specific DNA-binding protein that functions in genetic recombination as well as in transcriptional and translational control. The chain is Integration host factor subunit alpha from Allorhizobium ampelinum (strain ATCC BAA-846 / DSM 112012 / S4) (Agrobacterium vitis (strain S4)).